The following is a 134-amino-acid chain: DNA-binding protein inhibitor ID-2 (134 aa).

A phosphoserine mark is found at Ser-14 and Ser-25. The bHLH domain maps to 23–75 (SRSKTPVDDPMSLLYNMNDCYSKLKELVPSIPQNKKVSKMEILQHVIDYILDL). The Nuclear export signal signature appears at 106–115 (LNTDISILSL).

Interacts with GATA4 and NKX2-5. Interacts with NR0B2. Interacts with CLOCK and BMAL1. Interacts with IFI204. Interacts with NEDD9/HEF1. Interacts with ASB4; this interaction promotes ID2 proteasomal degradation. In terms of processing, ubiquitinated in a ASB4-depedent manner, leading to proteasomal degradation. Phosphorylated in vitro by CDK1, PKA and PKC. Highly expressed in early fetal tissues, including those of the central nervous system.

Its subcellular location is the cytoplasm. The protein localises to the nucleus. In terms of biological role, transcriptional regulator (lacking a basic DNA binding domain) which negatively regulates the basic helix-loop-helix (bHLH) transcription factors by forming heterodimers and inhibiting their DNA binding and transcriptional activity. Implicated in regulating a variety of cellular processes, including cellular growth, senescence, differentiation, apoptosis, angiogenesis, and neoplastic transformation. Inhibits skeletal muscle and cardiac myocyte differentiation. Regulates the circadian clock by repressing the transcriptional activator activity of the CLOCK-BMAL1 heterodimer. Restricts the CLOCK and BMAL1 localization to the cytoplasm. Plays a role in both the input and output pathways of the circadian clock: in the input component, is involved in modulating the magnitude of photic entrainment and in the output component, contributes to the regulation of a variety of liver clock-controlled genes involved in lipid metabolism. The protein is DNA-binding protein inhibitor ID-2 (ID2) of Homo sapiens (Human).